Reading from the N-terminus, the 1146-residue chain is ATP-dependent helicase/deoxyribonuclease subunit B (1146 aa).

Positions 1 to 280 constitute a UvrD-like helicase ATP-binding domain; it reads MSLRFIYGRA…LNSKPLFRFS (280 aa). 8–15 serves as a coordination point for ATP; that stretch reads GRAGSGKT. The UvrD-like helicase C-terminal domain occupies 276–584; sequence LFRFSQSPEL…LVGSLERSRS (309 aa). Residues cysteine 786, cysteine 1105, cysteine 1108, and cysteine 1114 each coordinate [4Fe-4S] cluster.

It belongs to the helicase family. AddB/RexB type 1 subfamily. Heterodimer of AddA and AddB. It depends on Mg(2+) as a cofactor. [4Fe-4S] cluster serves as cofactor.

The heterodimer acts as both an ATP-dependent DNA helicase and an ATP-dependent, dual-direction single-stranded exonuclease. Recognizes the chi site generating a DNA molecule suitable for the initiation of homologous recombination. The AddB subunit has 5' -&gt; 3' nuclease activity but not helicase activity. The chain is ATP-dependent helicase/deoxyribonuclease subunit B from Acetivibrio thermocellus (strain ATCC 27405 / DSM 1237 / JCM 9322 / NBRC 103400 / NCIMB 10682 / NRRL B-4536 / VPI 7372) (Clostridium thermocellum).